A 303-amino-acid polypeptide reads, in one-letter code: Deoxyhypusine hydroxylase (303 aa).

The residue at position 1 (methionine 1) is an N-acetylmethionine. HEAT-like PBS-type repeat units lie at residues 23–49 (ARFR…AFDD), 54–80 (LKHE…VLRD), 87–113 (VRHE…YSTD), 175–201 (DRYR…GLRC), 206–232 (FRHE…ALAQ), and 239–265 (VRHE…HVAD). Fe cation is bound by residues histidine 56, histidine 89, and glutamate 90. Fe cation contacts are provided by histidine 208, histidine 241, and glutamate 242.

This sequence belongs to the deoxyhypusine hydroxylase family. Fe(2+) is required as a cofactor.

The catalysed reaction is [eIF5A protein]-deoxyhypusine + AH2 + O2 = [eIF5A protein]-hypusine + A + H2O. It functions in the pathway protein modification; eIF5A hypusination. Catalyzes the hydroxylation of the N(6)-(4-aminobutyl)-L-lysine intermediate produced by deoxyhypusine synthase/DHPS on a critical lysine of the eukaryotic translation initiation factor 5A/eIF-5A. This is the second step of the post-translational modification of that lysine into an unusual amino acid residue named hypusine. Hypusination is unique to mature eIF-5A factor and is essential for its function. The protein is Deoxyhypusine hydroxylase of Bos taurus (Bovine).